A 183-amino-acid polypeptide reads, in one-letter code: ATP synthase subunit delta (183 aa).

Belongs to the ATPase delta chain family. In terms of assembly, F-type ATPases have 2 components, F(1) - the catalytic core - and F(0) - the membrane proton channel. F(1) has five subunits: alpha(3), beta(3), gamma(1), delta(1), epsilon(1). F(0) has three main subunits: a(1), b(2) and c(10-14). The alpha and beta chains form an alternating ring which encloses part of the gamma chain. F(1) is attached to F(0) by a central stalk formed by the gamma and epsilon chains, while a peripheral stalk is formed by the delta and b chains.

Its subcellular location is the cell inner membrane. In terms of biological role, f(1)F(0) ATP synthase produces ATP from ADP in the presence of a proton or sodium gradient. F-type ATPases consist of two structural domains, F(1) containing the extramembraneous catalytic core and F(0) containing the membrane proton channel, linked together by a central stalk and a peripheral stalk. During catalysis, ATP synthesis in the catalytic domain of F(1) is coupled via a rotary mechanism of the central stalk subunits to proton translocation. Its function is as follows. This protein is part of the stalk that links CF(0) to CF(1). It either transmits conformational changes from CF(0) to CF(1) or is implicated in proton conduction. This is ATP synthase subunit delta from Desulfatibacillum aliphaticivorans.